The chain runs to 217 residues: GRB2-related adapter protein (217 aa).

Residues 1 to 58 (MESVALYSFQATESDELAFNKGDTLKILNMEDDQNWYKAELRGAEGFVPKNYIRVKPH) form the SH3 1 domain. An SH2 domain is found at 60-152 (WYSGRISRQL…RRQIFLCDEQ (93 aa)). Positions 158–217 (SRACFAQAQFDFSAQDPSQLSLRRGDIVEVVEREDPHWWRGRAGGRLGFFPRSYVQPVHL) constitute an SH3 2 domain.

Belongs to the GRB2/sem-5/DRK family. As to quaternary structure, associates through its SH2 domain with ligand-activated receptors for stem cell factor (KIT) and erythropoietin (EPOR). Also forms a stable complex with the Bcr-Abl oncoprotein. GRAP is associated with the Ras guanine nucleotide exchange factor SOS1, primarily through its N-terminal SH3 domain. Interacts with phosphorylated LAT upon TCR activation. Interacts with SHB. Expressed in inner ear, in neruonal fibers innervating cochlear and utricular auditory hair cells (at protein level).

The protein localises to the membrane. It is found in the synapse. In terms of biological role, couples signals from receptor and cytoplasmic tyrosine kinases to the Ras signaling pathway. Plays a role in the inner ear and in hearing. The polypeptide is GRB2-related adapter protein (Mus musculus (Mouse)).